The primary structure comprises 292 residues: NAD kinase (292 aa).

Asp73 serves as the catalytic Proton acceptor. Residues 73–74 (DG), 147–148 (NE), His158, Arg175, Asp177, 188–193 (TGYSLS), and Gln247 contribute to the NAD(+) site.

The protein belongs to the NAD kinase family. A divalent metal cation serves as cofactor.

The protein localises to the cytoplasm. The catalysed reaction is NAD(+) + ATP = ADP + NADP(+) + H(+). In terms of biological role, involved in the regulation of the intracellular balance of NAD and NADP, and is a key enzyme in the biosynthesis of NADP. Catalyzes specifically the phosphorylation on 2'-hydroxyl of the adenosine moiety of NAD to yield NADP. The protein is NAD kinase of Buchnera aphidicola subsp. Acyrthosiphon pisum (strain 5A).